The sequence spans 123 residues: Defensin beta 118 (123 aa).

The first 19 residues, 1–19, serve as a signal peptide directing secretion; that stretch reads MKLLLLALPMLVLLPQVIP. Cystine bridges form between cysteine 27–cysteine 54, cysteine 34–cysteine 48, and cysteine 38–cysteine 55. The propeptide occupies 65–123; that stretch reads VPTTSPTPLSDSTRGVIDDILTVRFTTDYFEVSSKKNMVEESEVGQGTQTSLPNVHHSS. Residues 100-123 are disordered; it reads KNMVEESEVGQGTQTSLPNVHHSS. Residues 109-123 are compositionally biased toward polar residues; that stretch reads GQGTQTSLPNVHHSS.

The protein belongs to the beta-defensin family. In terms of processing, the three-dimensional structure formed by the three intramolecular disulfide bridges is indispensable for antimicrobial activity.

Its subcellular location is the secreted. Functionally, host defense peptide that exhibits antimicrobial activity against both Gram-negative bacteria, such as E.coli and S.typhimurium, and Gram-positive bacteria, such as S.aureus and B.subtilis. Inhibits cell adhesion of E.coli on intestinal epithelial enterocytes. Causes rapid permeabilization of both the outer and inner membrane of E.coli, leading to morphological alterations on the bacterial surface. Binds to bacterial lipopolysaccharides (LPS) with high affinity, and may thereby be involved in immunoregulation through LPS neutralization. May contribute to epididymal innate immunity and protect the sperm against attack by microorganisms. This Pongo pygmaeus (Bornean orangutan) protein is Defensin beta 118 (DEFB118).